Here is a 303-residue protein sequence, read N- to C-terminus: Signal recognition particle receptor FtsY (303 aa).

GTP is bound by residues 108–115 (GVNGVGKT), 190–194 (DTAGR), and 254–257 (TKLD).

The protein belongs to the GTP-binding SRP family. FtsY subfamily. Part of the signal recognition particle protein translocation system, which is composed of SRP and FtsY. SRP is a ribonucleoprotein composed of Ffh and a 4.5S RNA molecule.

Its subcellular location is the cell inner membrane. It is found in the cytoplasm. It carries out the reaction GTP + H2O = GDP + phosphate + H(+). Its function is as follows. Involved in targeting and insertion of nascent membrane proteins into the cytoplasmic membrane. Acts as a receptor for the complex formed by the signal recognition particle (SRP) and the ribosome-nascent chain (RNC). Interaction with SRP-RNC leads to the transfer of the RNC complex to the Sec translocase for insertion into the membrane, the hydrolysis of GTP by both Ffh and FtsY, and the dissociation of the SRP-FtsY complex into the individual components. The sequence is that of Signal recognition particle receptor FtsY from Rickettsia typhi (strain ATCC VR-144 / Wilmington).